The sequence spans 248 residues: ATP synthase subunit a (248 aa).

The next 6 helical transmembrane spans lie at 25-45, 83-103, 113-133, 142-162, 192-212, and 215-235; these read IAFT…AVMM, FFPL…VGII, LIVT…YGLA, LFVP…IEVI, FIAM…LPLG, and IALT…FAIL.

Belongs to the ATPase A chain family. F-type ATPases have 2 components, CF(1) - the catalytic core - and CF(0) - the membrane proton channel. CF(1) has five subunits: alpha(3), beta(3), gamma(1), delta(1), epsilon(1). CF(0) has four main subunits: a, b, b' and c.

It localises to the cell inner membrane. Functionally, key component of the proton channel; it plays a direct role in the translocation of protons across the membrane. The chain is ATP synthase subunit a from Rhodopseudomonas palustris (strain HaA2).